Reading from the N-terminus, the 499-residue chain is Cytochrome P450 2M1 (499 aa).

Heme is bound at residue Cys-441.

This sequence belongs to the cytochrome P450 family. The cofactor is heme. As to expression, in kidney and in liver from juvenile and sexually mature trout from both sexes.

The protein localises to the endoplasmic reticulum membrane. It is found in the microsome membrane. It catalyses the reaction an organic molecule + reduced [NADPH--hemoprotein reductase] + O2 = an alcohol + oxidized [NADPH--hemoprotein reductase] + H2O + H(+). Functionally, has (omega-6)-hydroxylation activity toward lauric acid. The chain is Cytochrome P450 2M1 (cyp2m1) from Oncorhynchus mykiss (Rainbow trout).